Reading from the N-terminus, the 158-residue chain is MVEKVPMTRGGHAALADELKKRQSVDRPRIIEQIAEARAHGDLSENAEYHAAKEEQSHNEGRIAELEDKLARADIIDVSKLSGDTIKFGATVTLIDEDTDKKAVWQIVGEAEADAKQGRISITSPLARALIGKKKGSSVEVVAPGGAKAYEIAKVEWR.

Residues 47–74 (AEYHAAKEEQSHNEGRIAELEDKLARAD) are a coiled coil.

The protein belongs to the GreA/GreB family.

Necessary for efficient RNA polymerase transcription elongation past template-encoded arresting sites. The arresting sites in DNA have the property of trapping a certain fraction of elongating RNA polymerases that pass through, resulting in locked ternary complexes. Cleavage of the nascent transcript by cleavage factors such as GreA or GreB allows the resumption of elongation from the new 3'terminus. GreA releases sequences of 2 to 3 nucleotides. The polypeptide is Transcription elongation factor GreA (Nitrobacter winogradskyi (strain ATCC 25391 / DSM 10237 / CIP 104748 / NCIMB 11846 / Nb-255)).